Here is a 261-residue protein sequence, read N- to C-terminus: DNA repair protein RecO (261 aa).

The protein belongs to the RecO family.

Functionally, involved in DNA repair and RecF pathway recombination. The protein is DNA repair protein RecO of Chlorobium limicola (strain DSM 245 / NBRC 103803 / 6330).